Consider the following 96-residue polypeptide: Aspartyl/glutamyl-tRNA(Asn/Gln) amidotransferase subunit C (96 aa).

It belongs to the GatC family. As to quaternary structure, heterotrimer of A, B and C subunits.

It carries out the reaction L-glutamyl-tRNA(Gln) + L-glutamine + ATP + H2O = L-glutaminyl-tRNA(Gln) + L-glutamate + ADP + phosphate + H(+). It catalyses the reaction L-aspartyl-tRNA(Asn) + L-glutamine + ATP + H2O = L-asparaginyl-tRNA(Asn) + L-glutamate + ADP + phosphate + 2 H(+). Functionally, allows the formation of correctly charged Asn-tRNA(Asn) or Gln-tRNA(Gln) through the transamidation of misacylated Asp-tRNA(Asn) or Glu-tRNA(Gln) in organisms which lack either or both of asparaginyl-tRNA or glutaminyl-tRNA synthetases. The reaction takes place in the presence of glutamine and ATP through an activated phospho-Asp-tRNA(Asn) or phospho-Glu-tRNA(Gln). This Leptospira interrogans serogroup Icterohaemorrhagiae serovar copenhageni (strain Fiocruz L1-130) protein is Aspartyl/glutamyl-tRNA(Asn/Gln) amidotransferase subunit C.